Reading from the N-terminus, the 160-residue chain is 3-hydroxyacyl-[acyl-carrier-protein] dehydratase FabZ (160 aa).

His63 is an active-site residue.

This sequence belongs to the thioester dehydratase family. FabZ subfamily.

The protein localises to the cytoplasm. It carries out the reaction a (3R)-hydroxyacyl-[ACP] = a (2E)-enoyl-[ACP] + H2O. Its function is as follows. Involved in unsaturated fatty acids biosynthesis. Catalyzes the dehydration of short chain beta-hydroxyacyl-ACPs and long chain saturated and unsaturated beta-hydroxyacyl-ACPs. In Xylella fastidiosa (strain M12), this protein is 3-hydroxyacyl-[acyl-carrier-protein] dehydratase FabZ.